A 464-amino-acid polypeptide reads, in one-letter code: Argininosuccinate lyase (464 aa).

The protein belongs to the lyase 1 family. Argininosuccinate lyase subfamily.

The protein localises to the cytoplasm. It carries out the reaction 2-(N(omega)-L-arginino)succinate = fumarate + L-arginine. Its pathway is amino-acid biosynthesis; L-arginine biosynthesis; L-arginine from L-ornithine and carbamoyl phosphate: step 3/3. The protein is Argininosuccinate lyase of Herminiimonas arsenicoxydans.